Consider the following 190-residue polypeptide: Small ribosomal subunit protein eS7B (190 aa).

Ser-2 carries the post-translational modification N-acetylserine. 2 positions are modified to phosphoserine: Ser-10 and Ser-31. Residues Lys-83 and Lys-84 each participate in a glycyl lysine isopeptide (Lys-Gly) (interchain with G-Cter in ubiquitin) cross-link.

This sequence belongs to the eukaryotic ribosomal protein eS7 family. Component of the small ribosomal subunit (SSU). Mature yeast ribosomes consist of a small (40S) and a large (60S) subunit. The 40S small subunit contains 1 molecule of ribosomal RNA (18S rRNA) and 33 different proteins (encoded by 57 genes). The large 60S subunit contains 3 rRNA molecules (25S, 5.8S and 5S rRNA) and 46 different proteins (encoded by 81 genes). Interacts with snoRNA U3. uS11 interacts with MPP10. Component of the ribosomal small subunit (SSU) processome composed of at least 40 protein subunits and snoRNA U3. N-terminally acetylated by acetyltransferase NatA. Post-translationally, ubiquitinated at Lys-83 and Lys-84 in response to stalled ribosomes, leading to activation of the No-Go Decay (NGD) pathway: first monoubiquitinated by MOT2/NOT4, followed by formation by HEL2 of 'Lys-63'-linked polyubiquitin chains on monoubiquitin.

The protein localises to the cytoplasm. It is found in the nucleus. Its subcellular location is the nucleolus. Its function is as follows. Component of the ribosome, a large ribonucleoprotein complex responsible for the synthesis of proteins in the cell. The small ribosomal subunit (SSU) binds messenger RNAs (mRNAs) and translates the encoded message by selecting cognate aminoacyl-transfer RNA (tRNA) molecules. The large subunit (LSU) contains the ribosomal catalytic site termed the peptidyl transferase center (PTC), which catalyzes the formation of peptide bonds, thereby polymerizing the amino acids delivered by tRNAs into a polypeptide chain. The nascent polypeptides leave the ribosome through a tunnel in the LSU and interact with protein factors that function in enzymatic processing, targeting, and the membrane insertion of nascent chains at the exit of the ribosomal tunnel. eS7 is involved in nucleolar processing of pre-18S ribosomal RNA and ribosome assembly. This chain is Small ribosomal subunit protein eS7B, found in Saccharomyces cerevisiae (strain ATCC 204508 / S288c) (Baker's yeast).